Reading from the N-terminus, the 774-residue chain is 1,4-alpha-glucan branching enzyme GlgB 1 (774 aa).

The segment at 1–66 (MTPRPSSSGP…AEVAVSPAPD (66 aa)) is disordered. Over residues 29 to 40 (KPAKAAKKKAPR) the composition is skewed to basic residues. The segment covering 41–55 (RTTASANASATTSVS) has biased composition (low complexity). The Nucleophile role is filled by Asp457. Glu510 serves as the catalytic Proton donor. A disordered region spans residues 748-774 (YGGGDVVNPDPVKPEPQGGTAARRASG).

It belongs to the glycosyl hydrolase 13 family. GlgB subfamily. In terms of assembly, monomer.

The catalysed reaction is Transfers a segment of a (1-&gt;4)-alpha-D-glucan chain to a primary hydroxy group in a similar glucan chain.. The protein operates within glycan biosynthesis; glycogen biosynthesis. Functionally, catalyzes the formation of the alpha-1,6-glucosidic linkages in glycogen by scission of a 1,4-alpha-linked oligosaccharide from growing alpha-1,4-glucan chains and the subsequent attachment of the oligosaccharide to the alpha-1,6 position. The protein is 1,4-alpha-glucan branching enzyme GlgB 1 (glgB1) of Streptomyces coelicolor (strain ATCC BAA-471 / A3(2) / M145).